Reading from the N-terminus, the 401-residue chain is Homeobox protein engrailed-1 (401 aa).

4 disordered regions span residues 1 to 102 (MEEQ…PAAQ), 138 to 167 (GGGA…HSLG), 229 to 253 (SKPS…AKFP), and 293 to 315 (RPSS…DKRP). Residues 13 to 48 (DSGLGAVAAAAPSGLSLSLSPGASGSSGSDGDSVPV) are compositionally biased toward low complexity. Pro residues-rich tracts occupy residues 49–64 (SPQP…PCLP) and 73–88 (PPHP…PPPQ). A compositionally biased stretch (low complexity) spans 89 to 102 (HLAAPAHQPQPAAQ). 2 stretches are compositionally biased toward gly residues: residues 138-147 (GGGAAAGGGS) and 234-243 (SGGGSGGNAG). A DNA-binding region (homeobox) is located at residues 312–371 (DKRPRTAFTAEQLQRLKAEFQANRYITEQRRQTLAQELSLNESQIKIWFQNKRAKIKKAT).

The protein belongs to the engrailed homeobox family.

It localises to the nucleus. Required for proper formation of the apical ectodermal ridge and correct dorsal-ventral patterning in the limb. The sequence is that of Homeobox protein engrailed-1 (En1) from Mus musculus (Mouse).